The following is a 774-amino-acid chain: E3 ubiquitin-protein ligase UHRF1 (774 aa).

The Ubiquitin-like domain occupies 1–78 (MWIQVRTMDG…IQLLVRQSLA (78 aa)). Phosphoserine occurs at positions 76, 91, 93, 95, and 161. Residues 83-120 (TKERDSELSDSDSGYGVGHSESDKSSTHGEGTADGDDK) form a disordered region. Tudor-like stretches follow at residues 129-205 (GLYK…ARAR) and 212-280 (DLEV…IELP). Lysine 276 participates in a covalent cross-link: Glycyl lysine isopeptide (Lys-Gly) (interchain with G-Cter in SUMO2). Serine 284 is modified (phosphoserine). The segment at 293–298 (RKSGPS) is linker. Phosphoserine; by PKA is present on serine 295. Residues 296–363 (GPSCQYCKDD…EWYCPSCRTD (68 aa)) form a PHD-type zinc finger. Histone H3R2me0 binding stretches follow at residues 330–334 (CDECD) and 350–352 (PPE). The residue at position 365 (serine 365) is a Phosphoserine. Lysine 382 is covalently cross-linked (Glycyl lysine isopeptide (Lys-Gly) (interchain with G-Cter in SUMO2)). The tract at residues 382 to 605 (KMASATSSSR…QLGLTMQYPE (224 aa)) is methyl-CpG binding and interaction with HDAC1. Lysine 396 carries the post-translational modification N6-acetyllysine. A YDG domain is found at 416-578 (GPIPGVPVGT…FIVWRYLLRR (163 aa)). Residues 442-443 (HV) form a required to promote base flipping region. DNA-binding positions include 460 to 461 (AG) and aspartate 466. Required for formation of a 5-methylcytosine-binding pocket stretches follow at residues 463-466 (YEDD) and 475-478 (YTGS). Serine 511 is subject to Phosphoserine. N6-acetyllysine; alternate is present on lysine 542. Residue lysine 542 forms a Glycyl lysine isopeptide (Lys-Gly) (interchain with G-Cter in SUMO2); alternate linkage. The disordered stretch occupies residues 616–657 (KNRKRPAKALEQGPSSSKIGKSKRKSTGPATTSPRVSKKSKL). Serine 631 carries the post-translational modification Phosphoserine; by CDK1. A phosphoserine mark is found at serine 641 and serine 648. Lysine 656 is covalently cross-linked (Glycyl lysine isopeptide (Lys-Gly) (interchain with G-Cter in SUMO2)). The RING-type zinc finger occupies 705-744 (CICCQELVFRPVTTVCQHNVCKDCLDRSFRAQVFSCPACR). Serine 751 is subject to Phosphoserine.

As to quaternary structure, interacts with DNMT3A and DNMT3B. Interacts with DNMT1; the interaction is direct. Interacts with USP7; leading to its deubiquitination. Interacts with histone H3. Interacts with HDAC1, but not with HDAC2. Interacts with BLTP3A. Interacts with PML. Interacts with EHMT2. Binds methylated CpG containing oligonucleotides. Interacts with ZNF263; recruited to the SIX3 promoter along with other proteins involved in chromatin modification and transcriptional corepression where it contributes to transcriptional repression. Interacts with UHRF2. Interacts with FANCD2. Interacts with TET1 isoform 2; this interaction induces the recruitment of TET1 isoform 2 to replicating heterochromatin. In terms of processing, phosphorylation at Ser-295 of the linker region decreases the binding to H3K9me3. Phosphorylation at Ser-631 by CDK1 during M phase impairs interaction with USP7, preventing deubiquitination and leading to degradation by the proteasome. Ubiquitinated; which leads to proteasomal degradation. Autoubiquitinated; interaction with USP7 leads to deubiquitination and prevents degradation. Ubiquitination and degradation takes place during M phase, when phosphorylation at Ser-631 prevents interaction with USP7 and subsequent deubiquitination. Polyubiquitination may be stimulated by DNA damage.

The protein localises to the nucleus. It catalyses the reaction S-ubiquitinyl-[E2 ubiquitin-conjugating enzyme]-L-cysteine + [acceptor protein]-L-lysine = [E2 ubiquitin-conjugating enzyme]-L-cysteine + N(6)-ubiquitinyl-[acceptor protein]-L-lysine.. Its pathway is protein modification; protein ubiquitination. Multidomain protein that acts as a key epigenetic regulator by bridging DNA methylation and chromatin modification. Specifically recognizes and binds hemimethylated DNA at replication forks via its YDG domain and recruits DNMT1 methyltransferase to ensure faithful propagation of the DNA methylation patterns through DNA replication. In addition to its role in maintenance of DNA methylation, also plays a key role in chromatin modification: through its tudor-like regions and PHD-type zinc fingers, specifically recognizes and binds histone H3 trimethylated at 'Lys-9' (H3K9me3) and unmethylated at 'Arg-2' (H3R2me0), respectively, and recruits chromatin proteins. Enriched in pericentric heterochromatin where it recruits different chromatin modifiers required for this chromatin replication. Also localizes to euchromatic regions where it negatively regulates transcription possibly by impacting DNA methylation and histone modifications. Has E3 ubiquitin-protein ligase activity by mediating the ubiquitination of target proteins such as histone H3 and PML. It is still unclear how E3 ubiquitin-protein ligase activity is related to its role in chromatin in vivo. Plays a role in DNA repair by cooperating with UHRF2 to ensure recruitment of FANCD2 to interstrand cross-links (ICLs) leading to FANCD2 activation. Plays a pivotal role in the establishment of correct spindle architecture by catalyzing the 'Lys-63'-linked ubiquitination of KIF11, thereby controlling KIF11 localization on the spindle. The chain is E3 ubiquitin-protein ligase UHRF1 (Uhrf1) from Rattus norvegicus (Rat).